We begin with the raw amino-acid sequence, 35 residues long: Anti-H(O) lectin 3 (35 aa).

The protein belongs to the leguminous lectin family. As to quaternary structure, homodimer. Highly glycosylated.

In terms of biological role, binds lactose or galactose. In Ulex europaeus (Furze), this protein is Anti-H(O) lectin 3.